A 411-amino-acid polypeptide reads, in one-letter code: Envelope glycoprotein G (411 aa).

The first 19 residues, 1–19 (MLTVLAALSLLSLLTSATG), serve as a signal peptide directing secretion. N-linked (GlcNAc...) asparagine; by host glycosylation is found at Asn-83, Asn-138, Asn-222, Asn-245, and Asn-317. Composition is skewed to polar residues over residues 306-327 (VPSS…SNSP) and 334-345 (SVNSDDSTHTGG). Residues 306–345 (VPSSAAESSLENQSTQEESNSPEVAHLRSVNSDDSTHTGG) are disordered. Residues 364–384 (LALIGLGTCAMIGLIVYICVL) traverse the membrane as a helical segment.

Belongs to the alphaherpesvirinae glycoprotein G family.

It localises to the virion membrane. Chemokine-binding protein that inhibits neutrophils' chemotaxis. In Equine herpesvirus 1 (strain Kentucky A) (EHV-1), this protein is Envelope glycoprotein G (gG).